The primary structure comprises 205 residues: Orotate phosphoribosyltransferase (205 aa).

116–124 serves as a coordination point for 5-phospho-alpha-D-ribose 1-diphosphate; sequence EDIITTGGS. Orotate contacts are provided by Thr-120 and Arg-148.

The protein belongs to the purine/pyrimidine phosphoribosyltransferase family. PyrE subfamily. As to quaternary structure, homodimer. Mg(2+) is required as a cofactor.

It catalyses the reaction orotidine 5'-phosphate + diphosphate = orotate + 5-phospho-alpha-D-ribose 1-diphosphate. The protein operates within pyrimidine metabolism; UMP biosynthesis via de novo pathway; UMP from orotate: step 1/2. In terms of biological role, catalyzes the transfer of a ribosyl phosphate group from 5-phosphoribose 1-diphosphate to orotate, leading to the formation of orotidine monophosphate (OMP). The chain is Orotate phosphoribosyltransferase from Wolinella succinogenes (strain ATCC 29543 / DSM 1740 / CCUG 13145 / JCM 31913 / LMG 7466 / NCTC 11488 / FDC 602W) (Vibrio succinogenes).